The following is a 333-amino-acid chain: uncharacterized protein (333 aa).

The protein to bacterial alkanal monooxygenase alpha and beta chains.

This is an uncharacterized protein from Bacillus subtilis (strain 168).